Reading from the N-terminus, the 217-residue chain is Octanoyltransferase (217 aa).

The BPL/LPL catalytic domain maps to 34–216 (SETRDELWLL…AASRASRHDR (183 aa)). Substrate contacts are provided by residues 73–80 (RGGQVTWH), 140–142 (ALG), and 153–155 (GLS). Cysteine 171 (acyl-thioester intermediate) is an active-site residue.

Belongs to the LipB family.

The protein resides in the cytoplasm. The catalysed reaction is octanoyl-[ACP] + L-lysyl-[protein] = N(6)-octanoyl-L-lysyl-[protein] + holo-[ACP] + H(+). It functions in the pathway protein modification; protein lipoylation via endogenous pathway; protein N(6)-(lipoyl)lysine from octanoyl-[acyl-carrier-protein]: step 1/2. Its function is as follows. Catalyzes the transfer of endogenously produced octanoic acid from octanoyl-acyl-carrier-protein onto the lipoyl domains of lipoate-dependent enzymes. Lipoyl-ACP can also act as a substrate although octanoyl-ACP is likely to be the physiological substrate. The protein is Octanoyltransferase of Halorhodospira halophila (strain DSM 244 / SL1) (Ectothiorhodospira halophila (strain DSM 244 / SL1)).